Consider the following 577-residue polypeptide: Moesin (577 aa).

Positions 2–295 (PKTINVRVTT…GNHELYMRRR (294 aa)) constitute an FERM domain. Ser-74 is modified (phosphoserine). At Lys-79 the chain carries N6-acetyllysine. Lys-83 carries the N6-succinyllysine modification. Residues 115 to 120 (IYCPPE) carry the [IL]-x-C-x-x-[DE] motif motif. Tyr-116 is subject to Phosphotyrosine. An S-nitrosocysteine modification is found at Cys-117. 2 positions are modified to N6-acetyllysine: Lys-139 and Lys-165. Positions 376-414 (EQERKRAQSEAEKLAKERQEAEEAKEALLKASRDQKKTQ) are enriched in basic and acidic residues. Disordered regions lie at residues 376 to 415 (EQERKRAQSEAEKLAKERQEAEEAKEALLKASRDQKKTQE) and 434 to 518 (ARQK…NERV). At Ser-407 the chain carries Phosphoserine. Positions 476–487 (AENDQDEQDENG) are enriched in acidic residues. Basic and acidic residues predominate over residues 492–518 (ADLRADAMAKDRSEEERTTEAEKNERV). At Ser-527 the chain carries Phosphoserine. Residue Thr-558 is modified to Phosphothreonine; by ROCK2 and STK10.

Binds NHERF1. In resting T-cells, part of a PAG1-NHERF1-MSN complex which is disrupted upon TCR activation. Interacts with PPP1R16B. Interacts with PDZD8. Interacts with SELPLG and SYK; mediates the activation of SYK by SELPLG. Interacts with PDPN (via cytoplasmic domain); activates RHOA and promotes epithelial-mesenchymal transition. Interacts with SPN/CD43 cytoplasmic tail, CD44 and ICAM2. Post-translationally, phosphorylation on Thr-558 is crucial for the formation of microvilli-like structures. Phosphorylation by ROCK2 suppresses the head-to-tail association of the N-terminal and C-terminal halves resulting in an opened conformation which is capable of actin and membrane-binding. Phosphorylation on Thr-558 by STK10 negatively regulates lymphocyte migration and polarization. S-nitrosylation of Cys-117 is induced by interferon-gamma and oxidatively-modified low-densitity lipoprotein (LDL(ox)) implicating the iNOS-S100A8/9 transnitrosylase complex.

The protein localises to the cell membrane. It is found in the cytoplasm. The protein resides in the cytoskeleton. It localises to the apical cell membrane. Its subcellular location is the cell projection. The protein localises to the microvillus membrane. It is found in the microvillus. A head-to-tail association, of the N-terminal and C-terminal halves results in a closed conformation (inactive form) which is incapable of actin or membrane-binding. Probably involved in connections of major cytoskeletal structures to the plasma membrane. Plays a role in regulating the proliferation, migration, and adhesion of human lymphoid cells and participates in immunologic synapse formation. In Sus scrofa (Pig), this protein is Moesin.